We begin with the raw amino-acid sequence, 469 residues long: Adenosylhomocysteinase (469 aa).

3 residues coordinate substrate: Thr63, Asp139, and Glu164. 165–167 (TTT) is a binding site for NAD(+). Substrate contacts are provided by Lys194 and Asp198. NAD(+) is bound by residues Asn199, 228–233 (GYGDVG), Glu251, Asn300, 321–323 (IGH), and Asn375.

The protein belongs to the adenosylhomocysteinase family. The cofactor is NAD(+).

The protein localises to the cytoplasm. The catalysed reaction is S-adenosyl-L-homocysteine + H2O = L-homocysteine + adenosine. The protein operates within amino-acid biosynthesis; L-homocysteine biosynthesis; L-homocysteine from S-adenosyl-L-homocysteine: step 1/1. Functionally, may play a key role in the regulation of the intracellular concentration of adenosylhomocysteine. This is Adenosylhomocysteinase from Pseudomonas putida (strain W619).